The primary structure comprises 325 residues: Acetyl-coenzyme A carboxylase carboxyl transferase subunit alpha (325 aa).

Residues 35-292 enclose the CoA carboxyltransferase C-terminal domain; that stretch reads EIEKLEARLA…DRVLRRSLKQ (258 aa).

The protein belongs to the AccA family. As to quaternary structure, acetyl-CoA carboxylase is a heterohexamer composed of biotin carboxyl carrier protein (AccB), biotin carboxylase (AccC) and two subunits each of ACCase subunit alpha (AccA) and ACCase subunit beta (AccD).

The protein localises to the cytoplasm. It carries out the reaction N(6)-carboxybiotinyl-L-lysyl-[protein] + acetyl-CoA = N(6)-biotinyl-L-lysyl-[protein] + malonyl-CoA. The protein operates within lipid metabolism; malonyl-CoA biosynthesis; malonyl-CoA from acetyl-CoA: step 1/1. In terms of biological role, component of the acetyl coenzyme A carboxylase (ACC) complex. First, biotin carboxylase catalyzes the carboxylation of biotin on its carrier protein (BCCP) and then the CO(2) group is transferred by the carboxyltransferase to acetyl-CoA to form malonyl-CoA. This chain is Acetyl-coenzyme A carboxylase carboxyl transferase subunit alpha, found in Geobacillus kaustophilus (strain HTA426).